We begin with the raw amino-acid sequence, 361 residues long: dTDP-glucose 4,6-dehydratase (361 aa).

NAD(+) is bound by residues 11–12, 32–35, 58–59, 80–84, and Thr-99; these read FI, DKLT, DI, and LAAES. Ser-84 provides a ligand contact to substrate. Residue Thr-133 coordinates substrate. The active-site Proton donor is the Asp-134. Catalysis depends on proton acceptor residues Glu-135 and Tyr-167. Residue 167 to 171 coordinates NAD(+); the sequence is YSASK. Asn-196 contributes to the substrate binding site. An NAD(+)-binding site is contributed by Asn-197. Substrate is bound by residues 206-207, 222-224, Arg-231, Asn-266, 296-300, and Tyr-357; these read KL, PIY, and DRPGH.

This sequence belongs to the NAD(P)-dependent epimerase/dehydratase family. dTDP-glucose dehydratase subfamily. Homodimer. Requires NAD(+) as cofactor.

It catalyses the reaction dTDP-alpha-D-glucose = dTDP-4-dehydro-6-deoxy-alpha-D-glucose + H2O. The protein operates within carbohydrate biosynthesis; dTDP-L-rhamnose biosynthesis. It participates in bacterial outer membrane biogenesis; LPS O-antigen biosynthesis. In terms of biological role, catalyzes the dehydration of dTDP-D-glucose to form dTDP-6-deoxy-D-xylo-4-hexulose via a three-step process involving oxidation, dehydration and reduction. This Salmonella typhimurium (strain LT2 / SGSC1412 / ATCC 700720) protein is dTDP-glucose 4,6-dehydratase.